Here is a 640-residue protein sequence, read N- to C-terminus: Threonine--tRNA ligase (640 aa).

Residues 1–61 (MPVITLPDGS…SNDATLQIIT (61 aa)) enclose the TGS domain. Positions 242–533 (DHRKIGKQLD…LIEHYAGVFP (292 aa)) are catalytic. Residues C333, H384, and H510 each contribute to the Zn(2+) site.

This sequence belongs to the class-II aminoacyl-tRNA synthetase family. In terms of assembly, homodimer. Zn(2+) serves as cofactor.

Its subcellular location is the cytoplasm. It carries out the reaction tRNA(Thr) + L-threonine + ATP = L-threonyl-tRNA(Thr) + AMP + diphosphate + H(+). In terms of biological role, catalyzes the attachment of threonine to tRNA(Thr) in a two-step reaction: L-threonine is first activated by ATP to form Thr-AMP and then transferred to the acceptor end of tRNA(Thr). Also edits incorrectly charged L-seryl-tRNA(Thr). This Pseudomonas putida (strain ATCC 47054 / DSM 6125 / CFBP 8728 / NCIMB 11950 / KT2440) protein is Threonine--tRNA ligase.